The primary structure comprises 168 residues: Cofilin-1-A (168 aa).

Alanine 2 carries the N-acetylalanine modification. Residues 4 to 153 (GVMVSDDVIK…NDPCNLADKL (150 aa)) enclose the ADF-H domain. The Nuclear localization signal motif lies at 30–34 (KKRKK).

Belongs to the actin-binding proteins ADF family. Inactive when phosphorylated. Phosphorylation levels vary during development. Oocytes contain only the phosphorylated form, and 80-95% of cfl1 protein is phosphorylated in unfertilized eggs. Rapid dephosphorylation occurs within 30 minutes after fertilization. Phosphorylation levels increase again between the morula and blastula stages (5-8 hpf) and then decrease again as gastrulation approaches. Dephosphorylated by pdxp. Expressed diffusely in both animal and vegetal hemispheres of the oocyte. During cleavage, expression accumulates around the cleavage furrow, along the vegetal membrane, and later in the midbody. Strongly expressed in the animal hemisphere during blastula stages, with most cells showing expression by gastrulation. By stage 17, expression is highest in cells of the developing neuroectoderm, and at stage 24 the notochord, neural tube, neural crest, somites and some cells of the archenteron show high expression. By stage 35, expression has declined in the notochord, but remains in the neural tube, epidermis and a layer of cells in the archenteron. Also highly expressed in the retina and neuronal cell bodies at the base of the cement gland but not the cement gland itself. At stage 38, expression is widespread, being highest in the nervous system and retina. In the adult, expression is high in the brain, heart, oocyte, stomach, and low in skeletal muscle.

Its subcellular location is the nucleus matrix. The protein resides in the cytoplasm. It is found in the cytoskeleton. It localises to the cell cortex. The protein localises to the membrane. Its function is as follows. May play a role in the regulation of cell morphology and cytoskeletal organization. Binds to F-actin and exhibits pH-sensitive F-actin depolymerizing activity. Required for formation of the cleavage furrow during cytokinesis. The chain is Cofilin-1-A (cfl1-a) from Xenopus laevis (African clawed frog).